We begin with the raw amino-acid sequence, 861 residues long: Ribosome biogenesis protein BOP1 homolog (861 aa).

The segment at 1–237 (MVANKSKATK…GDTSDEEDIR (237 aa)) is disordered. A compositionally biased stretch (polar residues) spans 29-45 (NGRSTKQPEADSDQSAS). Composition is skewed to acidic residues over residues 62 to 77 (DDGDSSDSEGEGDASD) and 87 to 143 (SDSD…EDLA). Composition is skewed to basic and acidic residues over residues 144 to 156 (EPEKPRAIKEGSK), 174 to 190 (ETKKLLEAAAKEDEKLA), and 212 to 223 (PERKTGRLKNSD). WD repeat units follow at residues 522 to 561 (GHTDMIRTISIEPKGEYLVTGSDDKTIKIWEVSTARCIKT), 563 to 603 (PTGD…CLLS), 692 to 730 (KSKGLIQCVLFHPVKPCLFVATQRHIRVYDLVKQELLKK), 733 to 772 (PSCKWISSMAIHPKGDNLLVATYEKKMMWFDLDLSTRPYQ), 776 to 815 (LHFSAIRNVAFHQRYPLFASASDDRSVIVSHGMVYNDLMQ), and 831 to 861 (VNDFGAFDVVFHPTQPWLFSSGADNTVRLYT).

It belongs to the WD repeat BOP1/ERB1 family.

It localises to the nucleus. Its subcellular location is the nucleolus. The protein resides in the nucleoplasm. Required for maturation of ribosomal RNAs and formation of the large ribosomal subunit. This chain is Ribosome biogenesis protein BOP1 homolog, found in Culex quinquefasciatus (Southern house mosquito).